The sequence spans 338 residues: Phosphoribosylformylglycinamidine cyclo-ligase (338 aa).

This sequence belongs to the AIR synthase family.

Its subcellular location is the cytoplasm. It carries out the reaction 2-formamido-N(1)-(5-O-phospho-beta-D-ribosyl)acetamidine + ATP = 5-amino-1-(5-phospho-beta-D-ribosyl)imidazole + ADP + phosphate + H(+). The protein operates within purine metabolism; IMP biosynthesis via de novo pathway; 5-amino-1-(5-phospho-D-ribosyl)imidazole from N(2)-formyl-N(1)-(5-phospho-D-ribosyl)glycinamide: step 2/2. The chain is Phosphoribosylformylglycinamidine cyclo-ligase from Thermoplasma acidophilum (strain ATCC 25905 / DSM 1728 / JCM 9062 / NBRC 15155 / AMRC-C165).